The primary structure comprises 325 residues: Ribosomal RNA small subunit methyltransferase H (325 aa).

S-adenosyl-L-methionine-binding positions include 45 to 47 (GGH), D65, Y92, D113, and Q120.

It belongs to the methyltransferase superfamily. RsmH family.

It localises to the cytoplasm. The enzyme catalyses cytidine(1402) in 16S rRNA + S-adenosyl-L-methionine = N(4)-methylcytidine(1402) in 16S rRNA + S-adenosyl-L-homocysteine + H(+). Functionally, specifically methylates the N4 position of cytidine in position 1402 (C1402) of 16S rRNA. The sequence is that of Ribosomal RNA small subunit methyltransferase H from Oleidesulfovibrio alaskensis (strain ATCC BAA-1058 / DSM 17464 / G20) (Desulfovibrio alaskensis).